Consider the following 513-residue polypeptide: Histidine ammonia-lyase (513 aa).

A cross-link (5-imidazolinone (Ala-Gly)) is located at residues 143-145 (ASG). S144 is modified (2,3-didehydroalanine (Ser)).

Belongs to the PAL/histidase family. Post-translationally, contains an active site 4-methylidene-imidazol-5-one (MIO), which is formed autocatalytically by cyclization and dehydration of residues Ala-Ser-Gly.

It localises to the cytoplasm. It carries out the reaction L-histidine = trans-urocanate + NH4(+). Its pathway is amino-acid degradation; L-histidine degradation into L-glutamate; N-formimidoyl-L-glutamate from L-histidine: step 1/3. The chain is Histidine ammonia-lyase from Paracoccus denitrificans (strain Pd 1222).